Here is a 216-residue protein sequence, read N- to C-terminus: LexA repressor (216 aa).

Positions 28 to 48 (RAEIAAEFGFSSPNAAEEHLR) form a DNA-binding region, H-T-H motif. Active-site for autocatalytic cleavage activity residues include Ser-134 and Lys-171.

This sequence belongs to the peptidase S24 family. Homodimer.

The enzyme catalyses Hydrolysis of Ala-|-Gly bond in repressor LexA.. Represses a number of genes involved in the response to DNA damage (SOS response), including recA and lexA. In the presence of single-stranded DNA, RecA interacts with LexA causing an autocatalytic cleavage which disrupts the DNA-binding part of LexA, leading to derepression of the SOS regulon and eventually DNA repair. The chain is LexA repressor from Ralstonia pickettii (strain 12J).